We begin with the raw amino-acid sequence, 139 residues long: Trafficking protein particle complex subunit 2-like protein (139 aa).

It belongs to the TRAPP small subunits family. Sedlin subfamily. As to quaternary structure, component of the multisubunit TRAPP (transport protein particle) complex, which includes at least TRAPPC2, TRAPPC2L, TRAPPC3, TRAPPC3L, TRAPPC4, TRAPPC5, TRAPPC8, TRAPPC9, TRAPPC10, TRAPPC11 and TRAPPC12. Interacts with the heterodimer TRAPPC3-TRAPPC6A.

It localises to the cytoplasm. It is found in the perinuclear region. The protein resides in the endoplasmic reticulum. Its subcellular location is the golgi apparatus. In terms of biological role, may play a role in vesicular transport from endoplasmic reticulum to Golgi. The polypeptide is Trafficking protein particle complex subunit 2-like protein (Trappc2l) (Rattus norvegicus (Rat)).